Consider the following 361-residue polypeptide: BBSome complex member bbs-5 (361 aa).

Belongs to the BBS5 family. In terms of assembly, part of BBSome complex, that contains at least bbs-1, bbs-2, bbs-4, bbs-5, osm-12, bbs-8/ttc-8 and bbs-9. Interacts with bbs-4 (via C-terminus); the interaction is direct.

The protein resides in the cell projection. The protein localises to the cilium membrane. It is found in the cytoplasm. It localises to the cytoskeleton. Its subcellular location is the cilium basal body. The protein resides in the microtubule organizing center. The protein localises to the centrosome. It is found in the centriolar satellite. Component of the BBSome complex. The BBSome complex is thought to function as a coat complex required for sorting of specific membrane proteins to the primary cilia. The BBSome complex is required for ciliogenesis but is dispensable for centriolar satellite function. Required for BBSome complex ciliary localization but not for the proper complex assembly. Required, redundantly with bbs-4, for cilia biogenesis and both the assembly and movement of intraflagellar transport proteins along the ciliary axoneme. Plays a role in the removal of degraded mechanosensory receptors within the cilia. In Caenorhabditis elegans, this protein is BBSome complex member bbs-5.